The chain runs to 275 residues: NH(3)-dependent NAD(+) synthetase (275 aa).

46–53 (GISGGQDS) is an ATP binding site. Mg(2+) is bound at residue Asp52. Arg140 provides a ligand contact to deamido-NAD(+). Position 160 (Thr160) interacts with ATP. Mg(2+) is bound at residue Glu165. Residues Lys173 and Asp180 each contribute to the deamido-NAD(+) site. Residues Lys189 and Thr211 each contribute to the ATP site. Deamido-NAD(+) is bound at residue 260–261 (HK).

This sequence belongs to the NAD synthetase family. In terms of assembly, homodimer.

It carries out the reaction deamido-NAD(+) + NH4(+) + ATP = AMP + diphosphate + NAD(+) + H(+). It participates in cofactor biosynthesis; NAD(+) biosynthesis; NAD(+) from deamido-NAD(+) (ammonia route): step 1/1. Catalyzes the ATP-dependent amidation of deamido-NAD to form NAD. Uses ammonia as a nitrogen source. The protein is NH(3)-dependent NAD(+) synthetase of Escherichia coli O17:K52:H18 (strain UMN026 / ExPEC).